A 284-amino-acid polypeptide reads, in one-letter code: Efem/EfeO family lipoprotein (284 aa).

The first 17 residues, 1–17 (MKKLTTLLLASTLLIAA), serve as a signal peptide directing secretion. Cys-18 carries the N-palmitoyl cysteine lipid modification. A lipid anchor (S-diacylglycerol cysteine) is attached at Cys-18.

The protein belongs to the EfeM/EfeO family.

Its subcellular location is the cell membrane. The chain is Efem/EfeO family lipoprotein from Staphylococcus aureus (strain MSSA476).